Here is a 126-residue protein sequence, read N- to C-terminus: C-X-C motif chemokine 9 (126 aa).

An N-terminal signal peptide occupies residues 1 to 21; it reads MKSAVLFLLGIIFLEQCGVRG. 2 disulfides stabilise this stretch: C30-C57 and C32-C73. An N-linked (GlcNAc...) asparagine glycan is attached at N58. Residues 91-126 form a disordered region; it reads KISQKKKQKRGKKHQKNMKNRKPKTPQSRRRSRKTT. Over residues 93 to 126 the composition is skewed to basic residues; sequence SQKKKQKRGKKHQKNMKNRKPKTPQSRRRSRKTT.

It belongs to the intercrine alpha (chemokine CxC) family.

The protein resides in the secreted. May be a cytokine that affects the growth, movement, or activation state of cells that participate in immune and inflammatory response. The protein is C-X-C motif chemokine 9 (Cxcl9) of Mus musculus (Mouse).